The following is an 853-amino-acid chain: Aryl hydrocarbon receptor (853 aa).

Residues 1–9 constitute a propeptide that is removed on maturation; that stretch reads MSSGANITY. The interval 1–38 is disordered; that stretch reads MSSGANITYASRKRRKPVQKTVKPVPAEGIKSNPSKRH. 2 short sequence motifs (nuclear localization signal) span residues 12 to 15 and 36 to 41; these read RKRR and KRHRDR. One can recognise a bHLH domain in the interval 26–79; that stretch reads PAEGIKSNPSKRHRDRLNTELDRLASLLPFPQDVINKLDKLSVLRLSVSYLRAK. Positions 37-65 are DNA-binding; sequence RHRDRLNTELDRLASLLPFPQDVINKLDK. Required for maintaining the overall integrity of the AHR:ARNT heterodimer and its transcriptional activity regions lie at residues 49–81, 116–124, and 264–266; these read LASLLPFPQDVINKLDKLSVLRLSVSYLRAKSF, LLQALNGFV, and FAI. The Nuclear export signal signature appears at 63-71; the sequence is LDKLSVLRL. The PAS 1 domain occupies 116–179; that stretch reads LLQALNGFVL…RQLHWALNPS (64 aa). The region spanning 273-340 is the PAS 2 domain; the sequence is PSILEIRTKN…CAESHIRMIK (68 aa). Residues 346–384 enclose the PAC domain; it reads MTVFRLLAKHSRWRWVQSNARLIYRNGRPDYIIATQRPL. Residues 429-451 form a disordered region; it reads TKSNTSRKDWAPQSTPSKDSFHP. The span at 440–451 shows a compositional bias: polar residues; sequence PQSTPSKDSFHP.

As to quaternary structure, homodimer. Heterodimer; efficient DNA binding requires dimerization with another bHLH protein. Interacts with ARNT; the heterodimer ARNT:AHR binds to core DNA sequence 5'-TGCGTG-3' within the dioxin response element (DRE) of target gene promoters and activates their transcription. Binds MYBBP1A. Interacts with coactivators including SRC-1, RIP140 and NOCA7, and with the corepressor SMRT. Interacts with NEDD8 and IVNS1ABP. Interacts with BMAL1. Interacts with HSP90AB1. Interacts with TIPARP; leading to mono-ADP-ribosylation of AHR and subsequent inhibition of AHR. Post-translationally, mono-ADP-ribosylated, leading to inhibit transcription activator activity of AHR. In terms of tissue distribution, expressed in all tissues tested including brain, heart, kidney, liver, lung, spleen, skeletal muscle and thymus.

Its subcellular location is the cytoplasm. It localises to the nucleus. Its function is as follows. Ligand-activated transcription factor that enables cells to adapt to changing conditions by sensing compounds from the environment, diet, microbiome and cellular metabolism, and which plays important roles in development, immunity and cancer. Upon ligand binding, translocates into the nucleus, where it heterodimerizes with ARNT and induces transcription by binding to xenobiotic response elements (XRE). Regulates a variety of biological processes, including angiogenesis, hematopoiesis, drug and lipid metabolism, cell motility and immune modulation. Xenobiotics can act as ligands: upon xenobiotic-binding, activates the expression of multiple phase I and II xenobiotic chemical metabolizing enzyme genes (such as the CYP1A1 gene). Mediates biochemical and toxic effects of halogenated aromatic hydrocarbons. Next to xenobiotics, natural ligands derived from plants, microbiota, and endogenous metabolism are potent AHR agonists. Tryptophan (Trp) derivatives constitute an important class of endogenous AHR ligands. Acts as a negative regulator of anti-tumor immunity: indoles and kynurenic acid generated by Trp catabolism act as ligand and activate AHR, thereby promoting AHR-driven cancer cell motility and suppressing adaptive immunity. Regulates the circadian clock by inhibiting the basal and circadian expression of the core circadian component PER1. Inhibits PER1 by repressing the CLOCK-BMAL1 heterodimer mediated transcriptional activation of PER1. The heterodimer ARNT:AHR binds to core DNA sequence 5'-TGCGTG-3' within the dioxin response element (DRE) of target gene promoters and activates their transcription. This is Aryl hydrocarbon receptor (Ahr) from Rattus norvegicus (Rat).